A 344-amino-acid chain; its full sequence is Cysteine proteinase 5 (344 aa).

The first 17 residues, 1 to 17 (MKVLSFLCVLLVSVATA), serve as a signal peptide directing secretion. Residues 18–111 (KQQFSELQYR…TQEEKVFTTS (94 aa)) constitute a propeptide, activation peptide. 3 disulfide bridges follow: Cys-133/Cys-174, Cys-167/Cys-207, and Cys-265/Cys-333. Residue Cys-136 is part of the active site. The active site involves His-272. Asn-297 carries N-linked (GlcNAc...) asparagine glycosylation. Residue Asn-311 is part of the active site.

This sequence belongs to the peptidase C1 family. In terms of processing, glycosylated; contains GlcNAc-alpha-1-P-Ser residues.

The protein resides in the lysosome. The polypeptide is Cysteine proteinase 5 (cprE) (Dictyostelium discoideum (Social amoeba)).